We begin with the raw amino-acid sequence, 361 residues long: Caffeic acid 3-O-methyltransferase 1 (361 aa).

Residue 128 to 134 (MNQDKVL) participates in substrate binding. Residues 160–178 (AFEYHGTDPRFNKVFNQGM) form a substrate binding region. Residues G206, D229, D249, M250, and K263 each contribute to the S-adenosyl-L-methionine site. H267 serves as the catalytic Proton acceptor.

Belongs to the class I-like SAM-binding methyltransferase superfamily. Cation-independent O-methyltransferase family. COMT subfamily. In terms of assembly, homodimer.

The catalysed reaction is (E)-caffeate + S-adenosyl-L-methionine = (E)-ferulate + S-adenosyl-L-homocysteine + H(+). Its pathway is aromatic compound metabolism; phenylpropanoid biosynthesis. Catalyzes the conversion of caffeic acid to ferulic acid and of 5-hydroxyferulic acid to sinapic acid. The resulting products may subsequently be converted to the corresponding alcohols that are incorporated into lignins. The chain is Caffeic acid 3-O-methyltransferase 1 (COMT1) from Ocimum basilicum (Sweet basil).